A 128-amino-acid chain; its full sequence is Z-ring associated protein G (128 aa).

Residues 7 to 27 form a helical membrane-spanning segment; that stretch reads EIWFSISIAFLIGTLCGVLVM. Residues 37–75 are a coiled coil; it reads QIQLKSELASAEAKIEEQKQQLERHFEQSANLLENLAED. The disordered stretch occupies residues 105–128; sequence NHANGDEDNQPRDYSDGSSGLLKS. Over residues 107-119 the composition is skewed to basic and acidic residues; it reads ANGDEDNQPRDYS.

It belongs to the ZapG family. As to quaternary structure, homotetramer. In solution, is primarily monomeric but forms small amounts of stable tetramer and hexadecamer. The crystal structure of the cytosolic region shows a coiled-coil tetramer in the asymmetric unit that is very likely to be a physiologically relevant assembly of the protein.

It localises to the cell inner membrane. Involved in cell division, cell envelope biogenesis and cell shape maintenance. This Haemophilus ducreyi (strain 35000HP / ATCC 700724) protein is Z-ring associated protein G.